Reading from the N-terminus, the 554-residue chain is Glutamine--tRNA ligase (554 aa).

The 'HIGH' region signature appears at 34-44; it reads PEPNGYLHIGH. Residues 35–37 and 41–47 contribute to the ATP site; these read EPN and HIGHAKS. L-glutamine contacts are provided by D67 and Y212. ATP contacts are provided by residues T231, 261-262, and 269-271; these read RL and MSK. A 'KMSKS' region motif is present at residues 268-272; it reads VMSKR. The segment at 317 to 324 is interaction with tRNA; that stretch reads TKQDNTIE.

It belongs to the class-I aminoacyl-tRNA synthetase family. In terms of assembly, monomer.

It localises to the cytoplasm. The enzyme catalyses tRNA(Gln) + L-glutamine + ATP = L-glutaminyl-tRNA(Gln) + AMP + diphosphate. This is Glutamine--tRNA ligase from Escherichia coli O157:H7.